The chain runs to 83 residues: Alpha-neurotoxin NTX-2 (83 aa).

Positions 1-21 (MKTLLLTLLVVTIVCLDLGYT) are cleaved as a signal peptide. Disulfide bonds link cysteine 24-cysteine 45, cysteine 38-cysteine 62, cysteine 64-cysteine 75, and cysteine 76-cysteine 81.

The protein belongs to the three-finger toxin family. Short-chain subfamily. Type I alpha-neurotoxin sub-subfamily. As to expression, expressed by the venom gland.

The protein resides in the secreted. Functionally, binds to muscle nicotinic acetylcholine receptor (nAChR) and inhibit acetylcholine from binding to the receptor, thereby impairing neuromuscular transmission. The chain is Alpha-neurotoxin NTX-2 from Naja sputatrix (Malayan spitting cobra).